Reading from the N-terminus, the 194-residue chain is dCTP deaminase, dUMP-forming (194 aa).

DCTP contacts are provided by residues 105–110 (RSSMGR), aspartate 123, 131–133 (TLE), glutamine 152, tyrosine 166, lysine 174, and glutamine 178. Residue glutamate 133 is the Proton donor/acceptor of the active site.

This sequence belongs to the dCTP deaminase family. In terms of assembly, homotrimer.

The enzyme catalyses dCTP + 2 H2O = dUMP + NH4(+) + diphosphate. Its pathway is pyrimidine metabolism; dUMP biosynthesis; dUMP from dCTP: step 1/1. Bifunctional enzyme that catalyzes both the deamination of dCTP to dUTP and the hydrolysis of dUTP to dUMP without releasing the toxic dUTP intermediate. The sequence is that of dCTP deaminase, dUMP-forming from Methanobrevibacter smithii (strain ATCC 35061 / DSM 861 / OCM 144 / PS).